A 432-amino-acid chain; its full sequence is Glutamate-1-semialdehyde 2,1-aminomutase 1 (432 aa).

Lys-272 is subject to N6-(pyridoxal phosphate)lysine.

Belongs to the class-III pyridoxal-phosphate-dependent aminotransferase family. HemL subfamily. In terms of assembly, homodimer. Pyridoxal 5'-phosphate is required as a cofactor.

It localises to the cytoplasm. The catalysed reaction is (S)-4-amino-5-oxopentanoate = 5-aminolevulinate. The protein operates within porphyrin-containing compound metabolism; protoporphyrin-IX biosynthesis; 5-aminolevulinate from L-glutamyl-tRNA(Glu): step 2/2. The protein is Glutamate-1-semialdehyde 2,1-aminomutase 1 of Exiguobacterium sibiricum (strain DSM 17290 / CCUG 55495 / CIP 109462 / JCM 13490 / 255-15).